A 380-amino-acid chain; its full sequence is Cytochrome b (380 aa).

4 consecutive transmembrane segments (helical) span residues 34 to 54 (FGSL…LLAM), 78 to 99 (WLIR…YLHI), 114 to 134 (WNTG…GYVL), and 179 to 199 (FFAL…VHLT). Heme b-binding residues include H84 and H98. 2 residues coordinate heme b: H183 and H197. Position 202 (H202) interacts with a ubiquinone. 4 helical membrane passes run 227–247 (LKDI…ALFS), 289–309 (LGGV…PFLH), 321–341 (LSQL…WVGS), and 348–368 (FIII…ILFP).

Belongs to the cytochrome b family. In terms of assembly, the cytochrome bc1 complex contains 11 subunits: 3 respiratory subunits (MT-CYB, CYC1 and UQCRFS1), 2 core proteins (UQCRC1 and UQCRC2) and 6 low-molecular weight proteins (UQCRH/QCR6, UQCRB/QCR7, UQCRQ/QCR8, UQCR10/QCR9, UQCR11/QCR10 and a cleavage product of UQCRFS1). This cytochrome bc1 complex then forms a dimer. Requires heme b as cofactor.

The protein resides in the mitochondrion inner membrane. Component of the ubiquinol-cytochrome c reductase complex (complex III or cytochrome b-c1 complex) that is part of the mitochondrial respiratory chain. The b-c1 complex mediates electron transfer from ubiquinol to cytochrome c. Contributes to the generation of a proton gradient across the mitochondrial membrane that is then used for ATP synthesis. This Procellaria westlandica (Westland petrel) protein is Cytochrome b (MT-CYB).